The sequence spans 309 residues: Diadenylate cyclase (309 aa).

The region spanning 144–301 is the DAC domain; it reads TITLYELFET…DGKIVFETDP (158 aa).

This sequence belongs to the adenylate cyclase family. DacZ subfamily. Mn(2+) serves as cofactor.

The catalysed reaction is 2 ATP = 3',3'-c-di-AMP + 2 diphosphate. Functionally, diadenylate cyclase that catalyzes the condensation of 2 ATP molecules into cyclic di-AMP (c-di-AMP). c-di-AMP is a second messenger for intracellular signal transduction involved in the control of important regulatory processes such as osmoregulation. The protein is Diadenylate cyclase of Methanocaldococcus jannaschii (strain ATCC 43067 / DSM 2661 / JAL-1 / JCM 10045 / NBRC 100440) (Methanococcus jannaschii).